The following is a 365-amino-acid chain: Histidinol-phosphate aminotransferase (365 aa).

Residue Lys-221 is modified to N6-(pyridoxal phosphate)lysine.

Belongs to the class-II pyridoxal-phosphate-dependent aminotransferase family. Histidinol-phosphate aminotransferase subfamily. Homodimer. It depends on pyridoxal 5'-phosphate as a cofactor.

The catalysed reaction is L-histidinol phosphate + 2-oxoglutarate = 3-(imidazol-4-yl)-2-oxopropyl phosphate + L-glutamate. It participates in amino-acid biosynthesis; L-histidine biosynthesis; L-histidine from 5-phospho-alpha-D-ribose 1-diphosphate: step 7/9. This chain is Histidinol-phosphate aminotransferase, found in Nitrobacter hamburgensis (strain DSM 10229 / NCIMB 13809 / X14).